A 288-amino-acid chain; its full sequence is Bifunctional protein FolD (288 aa).

NADP(+)-binding positions include 166–168 (GAS) and Ile-232.

It belongs to the tetrahydrofolate dehydrogenase/cyclohydrolase family. Homodimer.

The enzyme catalyses (6R)-5,10-methylene-5,6,7,8-tetrahydrofolate + NADP(+) = (6R)-5,10-methenyltetrahydrofolate + NADPH. It carries out the reaction (6R)-5,10-methenyltetrahydrofolate + H2O = (6R)-10-formyltetrahydrofolate + H(+). It participates in one-carbon metabolism; tetrahydrofolate interconversion. Its function is as follows. Catalyzes the oxidation of 5,10-methylenetetrahydrofolate to 5,10-methenyltetrahydrofolate and then the hydrolysis of 5,10-methenyltetrahydrofolate to 10-formyltetrahydrofolate. The sequence is that of Bifunctional protein FolD from Yersinia pseudotuberculosis serotype O:1b (strain IP 31758).